We begin with the raw amino-acid sequence, 242 residues long: 3-deoxy-manno-octulosonate cytidylyltransferase (242 aa).

Belongs to the KdsB family.

The protein localises to the cytoplasm. The enzyme catalyses 3-deoxy-alpha-D-manno-oct-2-ulosonate + CTP = CMP-3-deoxy-beta-D-manno-octulosonate + diphosphate. It participates in nucleotide-sugar biosynthesis; CMP-3-deoxy-D-manno-octulosonate biosynthesis; CMP-3-deoxy-D-manno-octulosonate from 3-deoxy-D-manno-octulosonate and CTP: step 1/1. Its pathway is bacterial outer membrane biogenesis; lipopolysaccharide biosynthesis. Functionally, activates KDO (a required 8-carbon sugar) for incorporation into bacterial lipopolysaccharide in Gram-negative bacteria. This is 3-deoxy-manno-octulosonate cytidylyltransferase from Mesorhizobium japonicum (strain LMG 29417 / CECT 9101 / MAFF 303099) (Mesorhizobium loti (strain MAFF 303099)).